The following is a 128-amino-acid chain: RutC family protein BU371 (128 aa).

It belongs to the RutC family.

The polypeptide is RutC family protein BU371 (Buchnera aphidicola subsp. Acyrthosiphon pisum (strain APS) (Acyrthosiphon pisum symbiotic bacterium)).